A 498-amino-acid chain; its full sequence is ATP synthase subunit beta, chloroplastic (498 aa).

Phosphothreonine is present on T6. A Phosphoserine modification is found at S13. 172 to 179 contributes to the ATP binding site; sequence GGAGVGKT.

This sequence belongs to the ATPase alpha/beta chains family. In terms of assembly, F-type ATPases have 2 components, CF(1) - the catalytic core - and CF(0) - the membrane proton channel. CF(1) has five subunits: alpha(3), beta(3), gamma(1), delta(1), epsilon(1). CF(0) has four main subunits: a(1), b(1), b'(1) and c(9-12).

It is found in the plastid. The protein localises to the chloroplast thylakoid membrane. It carries out the reaction ATP + H2O + 4 H(+)(in) = ADP + phosphate + 5 H(+)(out). Produces ATP from ADP in the presence of a proton gradient across the membrane. The catalytic sites are hosted primarily by the beta subunits. This Crucihimalaya wallichii (Rock-cress) protein is ATP synthase subunit beta, chloroplastic.